Here is a 421-residue protein sequence, read N- to C-terminus: 4-hydroxy-3-methylbut-2-en-1-yl diphosphate synthase (flavodoxin) (421 aa).

Residues cysteine 311, cysteine 314, cysteine 357, and glutamate 364 each contribute to the [4Fe-4S] cluster site.

This sequence belongs to the IspG family. The cofactor is [4Fe-4S] cluster.

The catalysed reaction is (2E)-4-hydroxy-3-methylbut-2-enyl diphosphate + oxidized [flavodoxin] + H2O + 2 H(+) = 2-C-methyl-D-erythritol 2,4-cyclic diphosphate + reduced [flavodoxin]. The protein operates within isoprenoid biosynthesis; isopentenyl diphosphate biosynthesis via DXP pathway; isopentenyl diphosphate from 1-deoxy-D-xylulose 5-phosphate: step 5/6. Converts 2C-methyl-D-erythritol 2,4-cyclodiphosphate (ME-2,4cPP) into 1-hydroxy-2-methyl-2-(E)-butenyl 4-diphosphate. This Stenotrophomonas maltophilia (strain K279a) protein is 4-hydroxy-3-methylbut-2-en-1-yl diphosphate synthase (flavodoxin).